The following is a 28-amino-acid chain: HSDAVFTDNYTRLRKQMAVKKYLNSILN.

Position 28 is an asparagine amide (asparagine 28).

This sequence belongs to the glucagon family.

The protein localises to the secreted. Its function is as follows. VIP is a neuropeptide involved in a diverse array of physiological processes through activating the PACAP subfamily of class B1 G protein-coupled receptors: VIP receptor 1 (VPR1) and VIP receptor 2 (VPR2). Abundantly expressed throughout the CNS and peripheral nervous systems where they primarily exert neuroprotective and immune modulatory roles. Also causes vasodilation, lowers arterial blood pressure, stimulates myocardial contractility, increases glycogenolysis and relaxes the smooth muscle of trachea, stomach and gall bladder. The protein is Vasoactive intestinal peptide (VIP) of Canis lupus familiaris (Dog).